A 238-amino-acid polypeptide reads, in one-letter code: MVERDNELKGTTFTISVLHISDGKPERIRQLLAAKVAQAPQFFNCAPLVINVERLADIPDFDQLKGLVESEDFVLVGITGARDEAMKTAAKAAGLAVMASGKSRKVEPLPLPEPTPSPVAEVKAAPAPLVPSKVHVGPVRSGQQLYAAGTSLVILGSVSQGAEVIADDSIHIYGALRGRAIAGAKGNTQARIYCQQLQAELLSIAGTFQLSDALPAGLIQQPVHVRLDNEQLRIDHIK.

This sequence belongs to the MinC family. As to quaternary structure, interacts with MinD and FtsZ.

Functionally, cell division inhibitor that blocks the formation of polar Z ring septums. Rapidly oscillates between the poles of the cell to destabilize FtsZ filaments that have formed before they mature into polar Z rings. Prevents FtsZ polymerization. This is Probable septum site-determining protein MinC from Aeromonas salmonicida (strain A449).